The chain runs to 356 residues: Ribosomal RNA large subunit methyltransferase M (356 aa).

S-adenosyl-L-methionine is bound by residues Ser-187, 220 to 223 (CPGG), Asp-239, Asp-259, and Asp-276. The active-site Proton acceptor is Lys-305.

The protein belongs to the class I-like SAM-binding methyltransferase superfamily. RNA methyltransferase RlmE family. RlmM subfamily. As to quaternary structure, monomer.

It is found in the cytoplasm. It catalyses the reaction cytidine(2498) in 23S rRNA + S-adenosyl-L-methionine = 2'-O-methylcytidine(2498) in 23S rRNA + S-adenosyl-L-homocysteine + H(+). Catalyzes the 2'-O-methylation at nucleotide C2498 in 23S rRNA. The chain is Ribosomal RNA large subunit methyltransferase M from Pseudoalteromonas atlantica (strain T6c / ATCC BAA-1087).